Here is a 143-residue protein sequence, read N- to C-terminus: Large ribosomal subunit protein uL11 (143 aa).

It belongs to the universal ribosomal protein uL11 family. In terms of assembly, part of the ribosomal stalk of the 50S ribosomal subunit. Interacts with L10 and the large rRNA to form the base of the stalk. L10 forms an elongated spine to which L12 dimers bind in a sequential fashion forming a multimeric L10(L12)X complex. Post-translationally, one or more lysine residues are methylated.

Forms part of the ribosomal stalk which helps the ribosome interact with GTP-bound translation factors. The sequence is that of Large ribosomal subunit protein uL11 from Bordetella pertussis (strain Tohama I / ATCC BAA-589 / NCTC 13251).